Reading from the N-terminus, the 495-residue chain is ATP synthase subunit beta, chloroplastic (495 aa).

An ATP-binding site is contributed by 172-179 (GGAGVGKT).

It belongs to the ATPase alpha/beta chains family. F-type ATPases have 2 components, CF(1) - the catalytic core - and CF(0) - the membrane proton channel. CF(1) has five subunits: alpha(3), beta(3), gamma(1), delta(1), epsilon(1). CF(0) has four main subunits: a(1), b(1), b'(1) and c(9-12).

The protein localises to the plastid. The protein resides in the chloroplast thylakoid membrane. It catalyses the reaction ATP + H2O + 4 H(+)(in) = ADP + phosphate + 5 H(+)(out). Produces ATP from ADP in the presence of a proton gradient across the membrane. The catalytic sites are hosted primarily by the beta subunits. In Brimeura amethystina (Spanish hyacinth), this protein is ATP synthase subunit beta, chloroplastic.